A 348-amino-acid chain; its full sequence is Fructose-1,6-bisphosphatase class 1 (348 aa).

4 residues coordinate Mg(2+): glutamate 104, aspartate 126, leucine 128, and aspartate 129. Residues 129-132 (DGSS), asparagine 221, tyrosine 249, and lysine 279 contribute to the substrate site. Glutamate 285 provides a ligand contact to Mg(2+).

It belongs to the FBPase class 1 family. In terms of assembly, homotetramer. The cofactor is Mg(2+).

The protein resides in the cytoplasm. It catalyses the reaction beta-D-fructose 1,6-bisphosphate + H2O = beta-D-fructose 6-phosphate + phosphate. It functions in the pathway carbohydrate biosynthesis; Calvin cycle. The sequence is that of Fructose-1,6-bisphosphatase class 1 from Thermosynechococcus vestitus (strain NIES-2133 / IAM M-273 / BP-1).